Here is a 361-residue protein sequence, read N- to C-terminus: MLYPEKFQGIGISNAKDWKHPKLVSFDPKPFGDHDVDVEIEACGICGSDFHIAVGNWGPVPENQILGHEIIGRVVKVGSKCHTGVKIGDRVGVGAQALACFECERCKSDNEQYCTNDHVLTMWTPYKDGYISQGGFASHVRLHEHFAIQIPENIPSPLAAPLLCGGITVFSPLLRNGCGPGKRVGIVGIGGIGHMGILLAKAMGAEVYAFSRGHSKREDSMKLGADHYIAMLEDKGWTEQYSNALDLLVVCSSSLSKVNFDSIVKIMKIGGSIVSIAAPEVNEKLVLKPLGLMGVSISSSAIGSRKEIEQLLKLVSEKNVKIWVEKLPISEEGVSHAFTRMESGDVKYRFTLVDYDKKFHK.

Residue C46 participates in Zn(2+) binding. NADP(+) is bound by residues G47 and H51. Residues H68, C100, C103, C106, C114, and C164 each contribute to the Zn(2+) site. Residues I189, G191, I192, S211, R212, K216, C251, S253, S256, I276, S300, and I302 each coordinate NADP(+). S316 is subject to Phosphoserine. R349 contacts NADP(+).

It belongs to the zinc-containing alcohol dehydrogenase family. In terms of assembly, homodimer. It depends on Zn(2+) as a cofactor.

It catalyses the reaction a primary alcohol + NADP(+) = an aldehyde + NADPH + H(+). The catalysed reaction is (E)-cinnamyl alcohol + NADP(+) = (E)-cinnamaldehyde + NADPH + H(+). It carries out the reaction 3-methylbutanol + NADP(+) = 3-methylbutanal + NADPH + H(+). Its function is as follows. NADP-dependent alcohol dehydrogenase with a broad substrate specificity. The oxidative reactions are more than 100 times less efficient than the corresponding reductions, suggesting that the enzyme acts as an aldehyde reductase, rather than as an alcohol dehydrogenase. The protein is NADP-dependent alcohol dehydrogenase 7 (ADH7) of Saccharomyces cerevisiae (strain ATCC 204508 / S288c) (Baker's yeast).